The primary structure comprises 397 residues: Dual-specificity RNA methyltransferase RlmN (397 aa).

E130 acts as the Proton acceptor in catalysis. Residues 138-377 (VEDRGAVCIS…ASPIRTPRGR (240 aa)) form the Radical SAM core domain. C145 and C383 form a disulfide bridge. [4Fe-4S] cluster contacts are provided by C152, C156, and C159. S-adenosyl-L-methionine-binding positions include 209–210 (GE), S241, 263–265 (SLH), and N340. C383 (S-methylcysteine intermediate) is an active-site residue.

It belongs to the radical SAM superfamily. RlmN family. [4Fe-4S] cluster is required as a cofactor.

The protein resides in the cytoplasm. It catalyses the reaction adenosine(2503) in 23S rRNA + 2 reduced [2Fe-2S]-[ferredoxin] + 2 S-adenosyl-L-methionine = 2-methyladenosine(2503) in 23S rRNA + 5'-deoxyadenosine + L-methionine + 2 oxidized [2Fe-2S]-[ferredoxin] + S-adenosyl-L-homocysteine. The enzyme catalyses adenosine(37) in tRNA + 2 reduced [2Fe-2S]-[ferredoxin] + 2 S-adenosyl-L-methionine = 2-methyladenosine(37) in tRNA + 5'-deoxyadenosine + L-methionine + 2 oxidized [2Fe-2S]-[ferredoxin] + S-adenosyl-L-homocysteine. Functionally, specifically methylates position 2 of adenine 2503 in 23S rRNA and position 2 of adenine 37 in tRNAs. m2A2503 modification seems to play a crucial role in the proofreading step occurring at the peptidyl transferase center and thus would serve to optimize ribosomal fidelity. The sequence is that of Dual-specificity RNA methyltransferase RlmN from Granulibacter bethesdensis (strain ATCC BAA-1260 / CGDNIH1).